We begin with the raw amino-acid sequence, 37 residues long: MIIFNNLPSFFVPLVGLVFPAIAMASLSLHVQKNKIF.

The chain crosses the membrane as a helical span at residues 7 to 27 (LPSFFVPLVGLVFPAIAMASL).

It belongs to the PsaI family.

It is found in the plastid. Its subcellular location is the chloroplast thylakoid membrane. May help in the organization of the PsaL subunit. This is Photosystem I reaction center subunit VIII from Eucalyptus globulus subsp. globulus (Tasmanian blue gum).